A 66-amino-acid chain; its full sequence is Large ribosomal subunit protein bL33c (66 aa).

The protein belongs to the bacterial ribosomal protein bL33 family.

The protein localises to the plastid. This is Large ribosomal subunit protein bL33c (rpl33) from Epifagus virginiana (Beechdrops).